Here is a 520-residue protein sequence, read N- to C-terminus: Glucose starvation modulator protein 1 (520 aa).

Positions 20–48 (CVFCHEKHLQCSNERPCKNCVKRGLAHEC) form a DNA-binding region, zn(2)-C6 fungal-type. Residues 376-445 (DYEKLSQLNS…FRLFKTVAVG (70 aa)) form the PAS domain.

It belongs to the ERT1/acuK family.

Its subcellular location is the nucleus. In terms of biological role, transcription factor which regulates nonfermentable carbon utilization. This chain is Glucose starvation modulator protein 1 (GSM1), found in Scheffersomyces stipitis (strain ATCC 58785 / CBS 6054 / NBRC 10063 / NRRL Y-11545) (Yeast).